Consider the following 84-residue polypeptide: Large ribosomal subunit protein bL31 (84 aa).

Cys16, Cys18, Cys38, and Cys41 together coordinate Zn(2+).

This sequence belongs to the bacterial ribosomal protein bL31 family. Type A subfamily. Part of the 50S ribosomal subunit. The cofactor is Zn(2+).

Its function is as follows. Binds the 23S rRNA. This Mycobacterium leprae (strain Br4923) protein is Large ribosomal subunit protein bL31.